Here is a 244-residue protein sequence, read N- to C-terminus: Aspartate/glutamate leucyltransferase (244 aa).

It belongs to the R-transferase family. Bpt subfamily.

It localises to the cytoplasm. It carries out the reaction N-terminal L-glutamyl-[protein] + L-leucyl-tRNA(Leu) = N-terminal L-leucyl-L-glutamyl-[protein] + tRNA(Leu) + H(+). It catalyses the reaction N-terminal L-aspartyl-[protein] + L-leucyl-tRNA(Leu) = N-terminal L-leucyl-L-aspartyl-[protein] + tRNA(Leu) + H(+). Its function is as follows. Functions in the N-end rule pathway of protein degradation where it conjugates Leu from its aminoacyl-tRNA to the N-termini of proteins containing an N-terminal aspartate or glutamate. This is Aspartate/glutamate leucyltransferase from Bordetella bronchiseptica (strain ATCC BAA-588 / NCTC 13252 / RB50) (Alcaligenes bronchisepticus).